We begin with the raw amino-acid sequence, 373 residues long: tRNA (guanine(26)-N(2))-dimethyltransferase (373 aa).

The 364-residue stretch at 2 to 365 (KIISEGETKL…AELSDLVVLI (364 aa)) folds into the Trm1 methyltransferase domain. Positions 35, 66, 86, 113, and 114 each coordinate S-adenosyl-L-methionine.

This sequence belongs to the class I-like SAM-binding methyltransferase superfamily. Trm1 family.

The enzyme catalyses guanosine(26) in tRNA + 2 S-adenosyl-L-methionine = N(2)-dimethylguanosine(26) in tRNA + 2 S-adenosyl-L-homocysteine + 2 H(+). In terms of biological role, dimethylates a single guanine residue at position 26 of a number of tRNAs using S-adenosyl-L-methionine as donor of the methyl groups. The protein is tRNA (guanine(26)-N(2))-dimethyltransferase of Methanococcus maripaludis (Methanococcus deltae).